Here is a 977-residue protein sequence, read N- to C-terminus: Bifunctional glutamine synthetase adenylyltransferase/adenylyl-removing enzyme (977 aa).

An adenylyl removase region spans residues 1–457; it reads MRLPLPSDLP…HFRQVIADPD (457 aa). The interval 468 to 977 is adenylyl transferase; it reads GGEWSPLWEQ…RRIWGELGLS (510 aa).

It belongs to the GlnE family. Mg(2+) serves as cofactor.

It catalyses the reaction [glutamine synthetase]-O(4)-(5'-adenylyl)-L-tyrosine + phosphate = [glutamine synthetase]-L-tyrosine + ADP. The catalysed reaction is [glutamine synthetase]-L-tyrosine + ATP = [glutamine synthetase]-O(4)-(5'-adenylyl)-L-tyrosine + diphosphate. Functionally, involved in the regulation of glutamine synthetase GlnA, a key enzyme in the process to assimilate ammonia. When cellular nitrogen levels are high, the C-terminal adenylyl transferase (AT) inactivates GlnA by covalent transfer of an adenylyl group from ATP to specific tyrosine residue of GlnA, thus reducing its activity. Conversely, when nitrogen levels are low, the N-terminal adenylyl removase (AR) activates GlnA by removing the adenylyl group by phosphorolysis, increasing its activity. The regulatory region of GlnE binds the signal transduction protein PII (GlnB) which indicates the nitrogen status of the cell. The sequence is that of Bifunctional glutamine synthetase adenylyltransferase/adenylyl-removing enzyme from Pseudomonas putida (strain ATCC 47054 / DSM 6125 / CFBP 8728 / NCIMB 11950 / KT2440).